The chain runs to 116 residues: Large ribosomal subunit protein bL19 (116 aa).

This sequence belongs to the bacterial ribosomal protein bL19 family.

In terms of biological role, this protein is located at the 30S-50S ribosomal subunit interface and may play a role in the structure and function of the aminoacyl-tRNA binding site. The sequence is that of Large ribosomal subunit protein bL19 from Chloroflexus aggregans (strain MD-66 / DSM 9485).